A 147-amino-acid chain; its full sequence is Large ribosomal subunit protein uL13 (147 aa).

It belongs to the universal ribosomal protein uL13 family. As to quaternary structure, part of the 50S ribosomal subunit.

Its function is as follows. This protein is one of the early assembly proteins of the 50S ribosomal subunit, although it is not seen to bind rRNA by itself. It is important during the early stages of 50S assembly. The protein is Large ribosomal subunit protein uL13 of Pediococcus pentosaceus (strain ATCC 25745 / CCUG 21536 / LMG 10740 / 183-1w).